The sequence spans 423 residues: Probable sucrose-phosphatase 1 (423 aa).

The protein belongs to the sucrose phosphatase family. In terms of assembly, homodimer. Requires Mg(2+) as cofactor.

The enzyme catalyses sucrose 6(F)-phosphate + H2O = sucrose + phosphate. The protein operates within glycan biosynthesis; sucrose biosynthesis; sucrose from D-fructose 6-phosphate and UDP-alpha-D-glucose: step 2/2. Catalyzes the final step of sucrose synthesis. This chain is Probable sucrose-phosphatase 1 (SPP1), found in Arabidopsis thaliana (Mouse-ear cress).